The following is a 517-amino-acid chain: ATP synthase subunit alpha 1 (517 aa).

Residue 174–181 (GDRQTGKT) participates in ATP binding.

This sequence belongs to the ATPase alpha/beta chains family. As to quaternary structure, F-type ATPases have 2 components, CF(1) - the catalytic core - and CF(0) - the membrane proton channel. CF(1) has five subunits: alpha(3), beta(3), gamma(1), delta(1), epsilon(1). CF(0) has three main subunits: a(1), b(2) and c(9-12). The alpha and beta chains form an alternating ring which encloses part of the gamma chain. CF(1) is attached to CF(0) by a central stalk formed by the gamma and epsilon chains, while a peripheral stalk is formed by the delta and b chains.

The protein resides in the cell inner membrane. The catalysed reaction is ATP + H2O + 4 H(+)(in) = ADP + phosphate + 5 H(+)(out). Functionally, produces ATP from ADP in the presence of a proton gradient across the membrane. The alpha chain is a regulatory subunit. The chain is ATP synthase subunit alpha 1 from Albidiferax ferrireducens (strain ATCC BAA-621 / DSM 15236 / T118) (Rhodoferax ferrireducens).